The chain runs to 264 residues: Small ribosomal subunit protein uS3 (264 aa).

One can recognise a KH type-2 domain in the interval 39-107; the sequence is VRDFLKKKLK…PVHVNIEEIR (69 aa). Residues 211–264 are disordered; it reads NDAPVVEEPQDDRRRRPGRPEGRRREGEGRPGGNRRGGAGAGRRAAPGDAKSGE. Residues 221–239 show a composition bias toward basic and acidic residues; sequence DDRRRRPGRPEGRRREGEG. The span at 240–251 shows a compositional bias: gly residues; sequence RPGGNRRGGAGA.

This sequence belongs to the universal ribosomal protein uS3 family. Part of the 30S ribosomal subunit. Forms a tight complex with proteins S10 and S14.

In terms of biological role, binds the lower part of the 30S subunit head. Binds mRNA in the 70S ribosome, positioning it for translation. This is Small ribosomal subunit protein uS3 from Cupriavidus pinatubonensis (strain JMP 134 / LMG 1197) (Cupriavidus necator (strain JMP 134)).